A 2291-amino-acid polypeptide reads, in one-letter code: Protein Ycf2 (2291 aa).

1645 to 1652 (GSIGTGRS) lines the ATP pocket.

The protein belongs to the Ycf2 family.

The protein resides in the plastid. The protein localises to the chloroplast stroma. Its function is as follows. Probable ATPase of unknown function. Its presence in a non-photosynthetic plant (Epifagus virginiana) and experiments in tobacco indicate that it has an essential function which is probably not related to photosynthesis. This chain is Protein Ycf2, found in Olimarabidopsis pumila (Dwarf rocket).